A 99-amino-acid chain; its full sequence is Nucleoid-associated protein Cj1642 (99 aa).

It belongs to the YbaB/EbfC family. Homodimer.

The protein resides in the cytoplasm. It is found in the nucleoid. Functionally, binds to DNA and alters its conformation. May be involved in regulation of gene expression, nucleoid organization and DNA protection. The polypeptide is Nucleoid-associated protein Cj1642 (Campylobacter jejuni subsp. jejuni serotype O:2 (strain ATCC 700819 / NCTC 11168)).